The following is a 162-amino-acid chain: UPF0260 protein Atu0932 (162 aa).

Belongs to the UPF0260 family.

The protein is UPF0260 protein Atu0932 of Agrobacterium fabrum (strain C58 / ATCC 33970) (Agrobacterium tumefaciens (strain C58)).